A 572-amino-acid chain; its full sequence is Proline--tRNA ligase (572 aa).

This sequence belongs to the class-II aminoacyl-tRNA synthetase family. ProS type 1 subfamily. In terms of assembly, homodimer.

It is found in the cytoplasm. The enzyme catalyses tRNA(Pro) + L-proline + ATP = L-prolyl-tRNA(Pro) + AMP + diphosphate. In terms of biological role, catalyzes the attachment of proline to tRNA(Pro) in a two-step reaction: proline is first activated by ATP to form Pro-AMP and then transferred to the acceptor end of tRNA(Pro). As ProRS can inadvertently accommodate and process non-cognate amino acids such as alanine and cysteine, to avoid such errors it has two additional distinct editing activities against alanine. One activity is designated as 'pretransfer' editing and involves the tRNA(Pro)-independent hydrolysis of activated Ala-AMP. The other activity is designated 'posttransfer' editing and involves deacylation of mischarged Ala-tRNA(Pro). The misacylated Cys-tRNA(Pro) is not edited by ProRS. The polypeptide is Proline--tRNA ligase (Escherichia fergusonii (strain ATCC 35469 / DSM 13698 / CCUG 18766 / IAM 14443 / JCM 21226 / LMG 7866 / NBRC 102419 / NCTC 12128 / CDC 0568-73)).